A 456-amino-acid chain; its full sequence is ATP synthase subunit beta 1 (456 aa).

152 to 159 contributes to the ATP binding site; that stretch reads GGAGVGKS.

It belongs to the ATPase alpha/beta chains family. In terms of assembly, F-type ATPases have 2 components, CF(1) - the catalytic core - and CF(0) - the membrane proton channel. CF(1) has five subunits: alpha(3), beta(3), gamma(1), delta(1), epsilon(1). CF(0) has three main subunits: a(1), b(2) and c(9-12). The alpha and beta chains form an alternating ring which encloses part of the gamma chain. CF(1) is attached to CF(0) by a central stalk formed by the gamma and epsilon chains, while a peripheral stalk is formed by the delta and b chains.

It localises to the cell membrane. The enzyme catalyses ATP + H2O + 4 H(+)(in) = ADP + phosphate + 5 H(+)(out). In terms of biological role, produces ATP from ADP in the presence of a proton gradient across the membrane. The catalytic sites are hosted primarily by the beta subunits. This Listeria innocua serovar 6a (strain ATCC BAA-680 / CLIP 11262) protein is ATP synthase subunit beta 1.